Consider the following 685-residue polypeptide: MMMVARVATAEHVGSAGASLPQTPGSRSFALGAHPGPQKRIGGPAQGQTAFITPLVTPDGIYSRPSSPYMQASPLLKGSESGGSAGSPQSPDAPSSASGASVGNAIGSGYTGNVSVAIRIKPSESSTKDPWYASNDRLIHTEFGEFQFDHVFTKGVCNQEVYQALGVPIIDKLFEGYNATIFAYGMTGSGKTFTMSGNKQEPGLIPQCVGNIFDRISSEHHGASLAYEVKVSYLEIYNEKIYDLLNYVDRQAGSTGQPSRNATGLKIRDDSKYGVKVVDLTEQLVSSHEDVMKWIATGDRNRKTGETDFNTRSSRSHAIVLLRLTRYDLKTGSEATSTLSLCDLAGSERAVTQIVRRKEGAFINKSLLALGTVIAKLSMLGSQANGLQPSPAAGHIPYRDSKLTRILQPALTGDSIITTICTIDSKAESSTETTNTVRFASRAKNIALNVRKNEMDSHAEKDTIIQNLRKQLDEQHETIVMLRRSAAAPSGNGSTSPLDSPGVGGTSLSERTHNMEKGLLEVENSILKTKLEHCEKLLDKDMMVLEDPHVREIVEMLPLDIASVLESKVQGMESQLRQYRVYVQKLESDLLKAQRNIITTHSVQFNRQSTANVQEKYGSDVDIELLLEEQEAELMELRNALKRKDKMIEALQSARRLRDSALSPTTTVLLQRKESVIDPRDPQPV.

2 disordered regions span residues 11-46 (EHVG…GPAQ) and 63-101 (SRPS…SGAS). The segment covering 86-101 (GSPQSPDAPSSASGAS) has biased composition (low complexity). Residues 113–446 (NVSVAIRIKP…VRFASRAKNI (334 aa)) form the Kinesin motor domain. Residue 185–192 (GMTGSGKT) participates in ATP binding. 2 coiled-coil regions span residues 464–486 (IIQN…RRSA) and 520–663 (LEVE…SALS). The interval 485–510 (SAAAPSGNGSTSPLDSPGVGGTSLSE) is disordered.

Belongs to the TRAFAC class myosin-kinesin ATPase superfamily. Kinesin family.

The protein localises to the cytoplasm. It is found in the cytoskeleton. Required for assembly of the mitotic spindle. The chain is Kinesin-like protein KIP2 (KIP2) from Eremothecium gossypii (strain ATCC 10895 / CBS 109.51 / FGSC 9923 / NRRL Y-1056) (Yeast).